Consider the following 458-residue polypeptide: Probable threonine--tRNA ligase, cytoplasmic (458 aa).

The region spanning 41–104 (DPIKITLLPD…EGDCSLEIFG (64 aa)) is the TGS domain.

The protein belongs to the class-II aminoacyl-tRNA synthetase family.

It is found in the cytoplasm. The enzyme catalyses tRNA(Thr) + L-threonine + ATP = L-threonyl-tRNA(Thr) + AMP + diphosphate + H(+). The chain is Probable threonine--tRNA ligase, cytoplasmic from Arabidopsis thaliana (Mouse-ear cress).